Consider the following 485-residue polypeptide: Glutamyl-tRNA(Gln) amidotransferase subunit A (485 aa).

Catalysis depends on charge relay system residues Lys-78 and Ser-153. Residue Ser-177 is the Acyl-ester intermediate of the active site.

This sequence belongs to the amidase family. GatA subfamily. Heterotrimer of A, B and C subunits.

The catalysed reaction is L-glutamyl-tRNA(Gln) + L-glutamine + ATP + H2O = L-glutaminyl-tRNA(Gln) + L-glutamate + ADP + phosphate + H(+). In terms of biological role, allows the formation of correctly charged Gln-tRNA(Gln) through the transamidation of misacylated Glu-tRNA(Gln) in organisms which lack glutaminyl-tRNA synthetase. The reaction takes place in the presence of glutamine and ATP through an activated gamma-phospho-Glu-tRNA(Gln). The chain is Glutamyl-tRNA(Gln) amidotransferase subunit A from Bacillus anthracis (strain A0248).